A 157-amino-acid polypeptide reads, in one-letter code: Small ribosomal subunit protein uS7 (157 aa).

The protein belongs to the universal ribosomal protein uS7 family. In terms of assembly, part of the 30S ribosomal subunit. Contacts proteins S9 and S11.

Functionally, one of the primary rRNA binding proteins, it binds directly to 16S rRNA where it nucleates assembly of the head domain of the 30S subunit. Is located at the subunit interface close to the decoding center, probably blocks exit of the E-site tRNA. The chain is Small ribosomal subunit protein uS7 from Delftia acidovorans (strain DSM 14801 / SPH-1).